An 833-amino-acid polypeptide reads, in one-letter code: MLGFLFKKVFGSKNDRYIKRLRPIVAAINALEPQMQSLRDEDFPVRIAEYRQQVEEGRKLDDMLPEVFALVREAGKRVFNMRHFDVQLVGGMALHHGKIAEMKTGEGKTLVATLPVVLNALTGKGVHVVTVNDYLAKRDAAWMGQLYNFLGLSVGVIVHGLDDEQRKAAYGADITYGTNNEFGFDYLRDNMKFYAEQLVQRGHNFAIVDEVDSILIDEARTPLIISGASEESTGLYRHMDEIVRKLTRDTHFTVDEKARTAMLTDEGVAFCETLVGIDNLYDPGNITTQHHLMQALKAHNLFRRDVDYIVKEGQVVIVDEFTGRLMPGRRFSDGLHQALEAKEAVKIEAENQTLASITFQNYFRMYAKLAGMTGTADTEAVEFHQIYSLEVVSIPTNKPMQRKDFADAIYRTKREKYDAIAQAIAELHKAGQPVLVGTISIETSELLSTMLKKTGVPHSVLNAKHHEKEAEIVALAGQRGHVTIATNMAGRGTDIVLGEGVRELGGLHILGTERHESRRIDNQLRGRSGRQGDPGSSRFYLSLEDDLMRLFGSERISGLMEKLGMEEGEPIEARMVSRAIENAQKRVEGHNFEIRKTLLDYDNVMNQQREVIYTLRRDAMSAPDLGPTMEEFLDDVLEDVYAPAEGGEAPSADTVAAVWGRLADVCNITRVMQPAPALPTRDEARAAVLSILHELREDTGESYRDIIRYFMLEELDRCWKEHLRNMDHLRDGIGLRGYGQRDPKLEYKREGFAMFQEMLFRIKEGVFRSLTRLRVQRVEEEAFRHKEQPAAVAYSGGEAEAGPAQPHREDPKVGRNDLCPCGSGRKYKKCCGA.

Residues Gln-87, 105–109, and Asp-494 each bind ATP; that span reads GEGKT. The interval 789–816 is disordered; that stretch reads PAAVAYSGGEAEAGPAQPHREDPKVGRN. The span at 806 to 815 shows a compositional bias: basic and acidic residues; it reads PHREDPKVGR. Zn(2+) contacts are provided by Cys-819, Cys-821, Cys-830, and Cys-831.

The protein belongs to the SecA family. Monomer and homodimer. Part of the essential Sec protein translocation apparatus which comprises SecA, SecYEG and auxiliary proteins SecDF-YajC and YidC. It depends on Zn(2+) as a cofactor.

The protein resides in the cell inner membrane. It localises to the cytoplasm. The enzyme catalyses ATP + H2O + cellular proteinSide 1 = ADP + phosphate + cellular proteinSide 2.. Part of the Sec protein translocase complex. Interacts with the SecYEG preprotein conducting channel. Has a central role in coupling the hydrolysis of ATP to the transfer of proteins into and across the cell membrane, serving as an ATP-driven molecular motor driving the stepwise translocation of polypeptide chains across the membrane. In Nitratidesulfovibrio vulgaris (strain DP4) (Desulfovibrio vulgaris), this protein is Protein translocase subunit SecA.